The following is a 628-amino-acid chain: Leucine-rich repeat and fibronectin type-III domain-containing protein 3 (628 aa).

An N-terminal signal peptide occupies residues 1 to 16 (MAVLPLLLCLLPLAPA). Topologically, residues 17 to 540 (SSPSQPATPS…APHAPFLGGT (524 aa)) are extracellular. One can recognise an LRRNT domain in the interval 19–59 (PSQPATPSPCPRRCRCQTQSLPLSVLCPGAGLLFVPPSLDR). 6 LRR repeats span residues 84-105 (GLLH…AFAD), 108-129 (ALRA…QLRG), 132-153 (NLRH…ALDD), 157-178 (TLED…ALGR), 181-202 (NVNT…AFSR), and 205-226 (KLAR…PLFS). An LRRCT domain is found at 249–295 (NPLHCNCELVWLRRLAREDDLEACASPPALGGRYFWAVGEEEFVCEP). The Ig-like domain occupies 295 to 382 (PPVVTHRSPP…GEATAAVELT (88 aa)). A disulfide bond links cysteine 317 and cysteine 366. Asparagine 348 and asparagine 393 each carry an N-linked (GlcNAc...) asparagine glycan. Positions 380–432 (ELTVGPPPPPQLANSTSCDPPRDGDPDALTPPSAASASAAAKAADTGPPTDRG) are disordered. Over residues 406 to 429 (DALTPPSAASASAAAKAADTGPPT) the composition is skewed to low complexity. Positions 427–525 (PPTDRGVQVT…GCARFSTEPA (99 aa)) constitute a Fibronectin type-III domain. A helical transmembrane segment spans residues 541-561 (MIIALGGVIVASVLVFIFVLL). Topologically, residues 562–628 (MRYKVHGGQP…WRPSHEPTGP (67 aa)) are cytoplasmic. The tract at residues 587–628 (QTNGSLGPTPAPPAPEPAAPRAHTVVQLDCEPWRPSHEPTGP) is disordered. Residues 595-604 (TPAPPAPEPA) show a composition bias toward pro residues. Over residues 617–628 (EPWRPSHEPTGP) the composition is skewed to basic and acidic residues.

Belongs to the LRFN family. In terms of assembly, can form heteromeric complexes with LRFN1, LRFN2, LRFN4 and LRFN5. Able to form homomeric complexes across cell junctions, between adjacent cells. Does not interact with DLG4. N-glycosylated.

Its subcellular location is the cell membrane. The protein localises to the cell projection. It is found in the axon. It localises to the dendrite. The protein resides in the synapse. Its subcellular location is the presynaptic cell membrane. The protein localises to the postsynaptic cell membrane. Its function is as follows. Cell adhesion molecule that mediates homophilic cell-cell adhesion in a Ca(2+)-independent manner. Promotes neurite outgrowth in hippocampal neurons. The sequence is that of Leucine-rich repeat and fibronectin type-III domain-containing protein 3 (LRFN3) from Ailuropoda melanoleuca (Giant panda).